Consider the following 80-residue polypeptide: UPF0291 protein LACR_1198 (80 aa).

Belongs to the UPF0291 family.

It localises to the cytoplasm. This chain is UPF0291 protein LACR_1198, found in Lactococcus lactis subsp. cremoris (strain SK11).